The chain runs to 308 residues: Low density lipoprotein receptor adapter protein 1 (308 aa).

Methionine 1 is modified (N-acetylmethionine). Phosphoserine occurs at positions 14, 186, and 202. Residues 42–196 (LLEGMLFSLK…QEGGDVLGAR (155 aa)) enclose the PID domain. Positions 212–216 (LLDLE) match the Clathrin box motif. Positions 249-276 (WELDDGLDEAFSRLAQSRTNPQVLDTGL) are AP-2 complex binding. The [DE]-X(1,2)-F-X-X-[FL]-X-X-X-R motif motif lies at 257–266 (EAFSRLAQSR).

As to quaternary structure, interacts (via PID domain) with LDLR (via NPXY motif). Binds to soluble clathrin trimers. Interacts with AP2B1; the interaction mediates the association with the AP-2 complex. Interacts with VLDLR. Interacts with LRP2. Expressed at high levels in the kidney, liver, and placenta, with lower levels detectable in brain, heart, muscle, colon, spleen, intestine, lung, and leukocytes.

The protein resides in the cytoplasm. Functionally, adapter protein (clathrin-associated sorting protein (CLASP)) required for efficient endocytosis of the LDL receptor (LDLR) in polarized cells such as hepatocytes and lymphocytes, but not in non-polarized cells (fibroblasts). May be required for LDL binding and internalization but not for receptor clustering in coated pits. May facilitate the endocytosis of LDLR and LDLR-LDL complexes from coated pits by stabilizing the interaction between the receptor and the structural components of the pits. May also be involved in the internalization of other LDLR family members. Binds to phosphoinositides, which regulate clathrin bud assembly at the cell surface. Required for trafficking of LRP2 to the endocytic recycling compartment which is necessary for LRP2 proteolysis, releasing a tail fragment which translocates to the nucleus and mediates transcriptional repression. In Homo sapiens (Human), this protein is Low density lipoprotein receptor adapter protein 1.